The sequence spans 348 residues: UDP-rhamnose/UDP-galactose transporter 2 (348 aa).

Transmembrane regions (helical) follow at residues 12-32 (AVSDVGAWAMNVTSSVGIIMA), 44-64 (FSFATTLTGFHFALTALVGMV), 81-101 (LLWFSLVANISIAAMNFSLML), 104-124 (VGFYQISKLSMIPVVCVMEWV), 133-153 (EVKASVMVVVVGVGICTVTDV), 160-180 (FICACTAVFSTSLQQISIGSL), 196-216 (APIQAISLLIFGPFVDYFLSG), 230-250 (LCILLSCALAVFCNISQYLCI), 257-277 (SFQVLGHMKTVCVLTLGWLIF), and 286-306 (IAGMVLAVVGMVIYSWAVELE).

It belongs to the TPT transporter family. TPT (TC 2.A.7.9) subfamily.

It is found in the golgi apparatus membrane. Its function is as follows. Nucleotide-sugar transporter that transports UDP-rhamnose or UDP-galactose and UMP in a strict counter-exchange mode. This is UDP-rhamnose/UDP-galactose transporter 2 from Arabidopsis thaliana (Mouse-ear cress).